The sequence spans 361 residues: MWLKSLTLKHFRNYQDAEINFHSGLNIFLGQNAQGKTNILESIYFLALTRSHRTRSDKDFIHFQEKDLKVSGILEKKTGTIPLDIELTAKGRITKINHLKQNRLSDYIGAMNVVLFAPEDLQLIKGSPSLRRKFIDIELGQIKPIYLADLSNYNHVLKQRNSYLKNSQNIDENFLSVLDEQLIEYGCRVVKHRLDFLKKLEIFAQEKHLDISQKKETLTIDYLSSVPLQDIDSIEESFRLSLSKNRKRDLFKQNTGVGPHRDDIAFFINQMDANYGSQGQHRSVVLSLKLAEIKLIENITKESPILLLDDVMSELDNDRQLKLLETISQEIQTFITTTTLEHLKNLPKDIKIFEISNGNIK.

30–37 (GQNAQGKT) lines the ATP pocket.

It belongs to the RecF family.

Its subcellular location is the cytoplasm. Its function is as follows. The RecF protein is involved in DNA metabolism; it is required for DNA replication and normal SOS inducibility. RecF binds preferentially to single-stranded, linear DNA. It also seems to bind ATP. In Streptococcus gordonii (strain Challis / ATCC 35105 / BCRC 15272 / CH1 / DL1 / V288), this protein is DNA replication and repair protein RecF.